A 205-amino-acid polypeptide reads, in one-letter code: Large ribosomal subunit protein uL3c (205 aa).

A disordered region spans residues Ser-129 to Arg-154.

The protein belongs to the universal ribosomal protein uL3 family. In terms of assembly, part of the 50S ribosomal subunit.

Its subcellular location is the plastid. It is found in the chloroplast. Its function is as follows. One of the primary rRNA binding proteins, it binds directly near the 3'-end of the 23S rRNA, where it nucleates assembly of the 50S subunit. The sequence is that of Large ribosomal subunit protein uL3c (rpl3) from Pyropia yezoensis (Susabi-nori).